The following is a 490-amino-acid chain: Betaine aldehyde dehydrogenase (490 aa).

Residues Thr26, Ile27, and Asp93 each contribute to the K(+) site. NAD(+) is bound at residue 150-152 (GAW). Lys162 acts as the Charge relay system in catalysis. Residue 176–179 (KPSE) participates in NAD(+) binding. Val180 is a K(+) binding site. NAD(+) is bound at residue 230 to 233 (GVAS). Leu246 contacts K(+). The active-site Proton acceptor is Glu252. The NAD(+) site is built by Gly254, Cys286, and Glu387. Cys286 functions as the Nucleophile in the catalytic mechanism. Cys286 carries the post-translational modification Cysteine sulfenic acid (-SOH). 2 residues coordinate K(+): Lys457 and Gly460. The Charge relay system role is filled by Glu464.

This sequence belongs to the aldehyde dehydrogenase family. As to quaternary structure, dimer of dimers. It depends on K(+) as a cofactor.

The catalysed reaction is betaine aldehyde + NAD(+) + H2O = glycine betaine + NADH + 2 H(+). It participates in amine and polyamine biosynthesis; betaine biosynthesis via choline pathway; betaine from betaine aldehyde: step 1/1. Its function is as follows. Involved in the biosynthesis of the osmoprotectant glycine betaine. Catalyzes the irreversible oxidation of betaine aldehyde to the corresponding acid. The chain is Betaine aldehyde dehydrogenase from Escherichia coli (strain ATCC 8739 / DSM 1576 / NBRC 3972 / NCIMB 8545 / WDCM 00012 / Crooks).